The primary structure comprises 101 residues: Large ribosomal subunit protein eL30 (101 aa).

It belongs to the eukaryotic ribosomal protein eL30 family.

The chain is Large ribosomal subunit protein eL30 from Pyrobaculum islandicum (strain DSM 4184 / JCM 9189 / GEO3).